The following is a 708-amino-acid chain: Capsid scaffolding protein (708 aa).

Catalysis depends on charge relay system residues H63, S132, and H157. Disordered regions lie at residues 270-339, 455-565, and 593-620; these read SAER…MSHP, HPSY…QQQR, and ALPS…GGGE. A compositionally biased stretch (low complexity) spans 284–293; that stretch reads PAAGARVPSS. Pro residues predominate over residues 294–311; it reads SPSPPVEPPSPVQPPALP. Residues 326 to 339 are compositionally biased toward low complexity; sequence SPSEPAEAASMSHP. An interaction with pAP region spans residues 333-352; it reads AASMSHPLSAAVPAATAPPG. Positions 498–513 are enriched in basic residues; that stretch reads KQHRHGGSGGHNKRRK. 2 short sequence motifs (nuclear localization signal) span residues 510 to 515 and 537 to 543; these read KRRKET and RARKRLK. The span at 593-615 shows a compositional bias: low complexity; that stretch reads ALPSAASSSPTTTTVCTPTSELT. Positions 688–708 are interaction with major capsid protein; that stretch reads PPKDMVDLNRRIFVAALNKLE.

The protein belongs to the herpesviridae capsid scaffolding protein family. As to quaternary structure, homomultimer. Interacts with major capsid protein. In terms of assembly, exists in a monomer-dimer equilibrium with the dimer being the active species. Post-translationally, capsid scaffolding protein is cleaved by assemblin after formation of the spherical procapsid. As a result, the capsid obtains its mature, icosahedral shape. Cleavages occur at two or more sites: release (R-site) and maturation (M-site).

The protein localises to the host cytoplasm. Its subcellular location is the host nucleus. The catalysed reaction is Cleaves -Ala-|-Ser- and -Ala-|-Ala- bonds in the scaffold protein.. Its function is as follows. Acts as a scaffold protein by binding major capsid protein in the cytoplasm, inducing the nuclear localization of both proteins. Multimerizes in the nucleus such as major capsid protein forms the icosahedral T=16 capsid. Autocatalytic cleavage releases the assembly protein, and subsequently abolishes interaction with major capsid protein. Cleavages products are evicted from the capsid before or during DNA packaging. Protease that plays an essential role in virion assembly within the nucleus. Catalyzes the cleavage of the assembly protein after formation of the spherical procapsid. By that cleavage, the capsid matures and gains its icosahedral shape. The cleavage sites seem to include -Ala-Ser-, -Ala-Ala-, as well as Ala-Thr bonds. Assemblin and cleavages products are evicted from the capsid before or during DNA packaging. Functionally, plays a major role in capsid assembly. Acts as a scaffold protein by binding major capsid protein. Multimerizes in the nucleus such as major capsid protein forms the icosahedral T=16 capsid. Cleaved by assemblin after capsid completion. The cleavages products are evicted from the capsid before or during DNA packaging. The chain is Capsid scaffolding protein (UL80) from Homo sapiens (Human).